A 637-amino-acid polypeptide reads, in one-letter code: MLPFTREMHRFSPIVEFLLSKRQIFLHYSQFKSRFDLIHRSFHVSRALEDNFRRSNGIGLVCLEKSHNDRTKNSKYDEFASDVEKSYRILRKFHSRVPKLELALNESGVELRPGLIERVLNRCGDAGNLGYRFFVWAAKQPRYCHSIEVYKSMVKILSKMRQFGAVWGLIEEMRKENPQLIEPELFVVLVQRFASADMVKKAIEVLDEMPKFGFEPDEYVFGCLLDALCKHGSVKDAAKLFEDMRMRFPVNLRYFTSLLYGWCRVGKMMEAKYVLVQMNEAGFEPDIVDYTNLLSGYANAGKMADAYDLLRDMRRRGFEPNANCYTVLIQALCKVDRMEEAMKVFVEMERYECEADVVTYTALVSGFCKWGKIDKCYIVLDDMIKKGLMPSELTYMHIMVAHEKKESFEECLELMEKMRQIEYHPDIGIYNVVIRLACKLGEVKEAVRLWNEMEENGLSPGVDTFVIMINGLASQGCLLEASDHFKEMVTRGLFSVSQYGTLKLLLNTVLKDKKLEMAKDVWSCITSKGACELNVLSWTIWIHALFSKGYEKEACSYCIEMIEMDFMPQPDTFAKLMKGLKKLYNREFAGEITEKVRNMAAEREMSFKMYKRRGVQDLTEKAKSKQDREGKKKQRSR.

12 PPR repeats span residues 146–180, 182–216, 217–247, 251–285, 286–320, 321–355, 356–390, 391–425, 426–460, 461–495, 498–532, and 534–568; these read SIEVYKSMVKILSKMRQFGAVWGLIEEMRKENPQL, EPELFVVLVQRFASADMVKKAIEVLDEMPKFGFEP, DEYVFGCLLDALCKHGSVKDAAKLFEDMRMR, NLRYFTSLLYGWCRVGKMMEAKYVLVQMNEAGFEP, DIVDYTNLLSGYANAGKMADAYDLLRDMRRRGFEP, NANCYTVLIQALCKVDRMEEAMKVFVEMERYECEA, DVVTYTALVSGFCKWGKIDKCYIVLDDMIKKGLMP, SELTYMHIMVAHEKKESFEECLELMEKMRQIEYHP, DIGIYNVVIRLACKLGEVKEAVRLWNEMEENGLSP, GVDTFVIMINGLASQGCLLEASDHFKEMVTRGLFS, QYGTLKLLLNTVLKDKKLEMAKDVWSCITSKGACE, and NVLSWTIWIHALFSKGYEKEACSYCIEMIEMDFMP. The segment covering 616-630 has biased composition (basic and acidic residues); the sequence is QDLTEKAKSKQDREG. Residues 616–637 form a disordered region; sequence QDLTEKAKSKQDREGKKKQRSR.

Belongs to the PPR family. P subfamily.

This chain is Putative pentatricopeptide repeat-containing protein At5g65820, found in Arabidopsis thaliana (Mouse-ear cress).